Here is a 413-residue protein sequence, read N- to C-terminus: Dolichyl-diphosphooligosaccharide--protein glycosyltransferase 48 kDa subunit (413 aa).

Topologically, residues 1-383 are lumenal; sequence GPRSLVLLEN…QYERFIPSAY (383 aa). Residues 384-404 traverse the membrane as a helical segment; the sequence is PYYAGAFSMMVGLFMFSIVFL. The Cytoplasmic segment spans residues 405–413; that stretch reads HMKEKEKSD.

Belongs to the DDOST 48 kDa subunit family. In terms of assembly, component of the oligosaccharyltransferase (OST) complex.

It is found in the endoplasmic reticulum. The protein localises to the endoplasmic reticulum membrane. Its pathway is protein modification; protein glycosylation. Functionally, subunit of the oligosaccharyl transferase (OST) complex that catalyzes the initial transfer of a defined glycan (Glc(3)Man(9)GlcNAc(2) in eukaryotes) from the lipid carrier dolichol-pyrophosphate to an asparagine residue within an Asn-X-Ser/Thr consensus motif in nascent polypeptide chains, the first step in protein N-glycosylation. N-glycosylation occurs cotranslationally and the complex associates with the Sec61 complex at the channel-forming translocon complex that mediates protein translocation across the endoplasmic reticulum (ER). All subunits are required for a maximal enzyme activity. Required for the assembly of both SST3A- and SS3B-containing OST complexes. The polypeptide is Dolichyl-diphosphooligosaccharide--protein glycosyltransferase 48 kDa subunit (Gallus gallus (Chicken)).